The primary structure comprises 215 residues: Cytokinin riboside 5'-monophosphate phosphoribohydrolase LOG3 (215 aa).

Substrate-binding positions include glutamate 84, 102–103 (RK), 119–125 (GYGTLEE), and threonine 131.

This sequence belongs to the LOG family. As to expression, expressed in roots and shoots. Detected in root procambium, lateral root primordia, vascular tissues of immature leaves, axillary buds, style and ovular funiculus.

It localises to the cytoplasm. The protein resides in the nucleus. It carries out the reaction N(6)-(dimethylallyl)adenosine 5'-phosphate + H2O = N(6)-dimethylallyladenine + D-ribose 5-phosphate. It catalyses the reaction 9-ribosyl-trans-zeatin 5'-phosphate + H2O = trans-zeatin + D-ribose 5-phosphate. Its function is as follows. Cytokinin-activating enzyme working in the direct activation pathway. Phosphoribohydrolase that converts inactive cytokinin nucleotides to the biologically active free-base forms. This chain is Cytokinin riboside 5'-monophosphate phosphoribohydrolase LOG3 (LOG3), found in Arabidopsis thaliana (Mouse-ear cress).